A 275-amino-acid polypeptide reads, in one-letter code: Diaminopimelate epimerase (275 aa).

Residues asparagine 13, glutamine 46, and asparagine 66 each contribute to the substrate site. Catalysis depends on cysteine 75, which acts as the Proton donor. Substrate contacts are provided by residues 76–77, asparagine 159, asparagine 192, and 210–211; these read GN and ER. Cysteine 219 (proton acceptor) is an active-site residue. Residue 220 to 221 coordinates substrate; that stretch reads GS.

This sequence belongs to the diaminopimelate epimerase family. As to quaternary structure, homodimer.

The protein resides in the cytoplasm. The catalysed reaction is (2S,6S)-2,6-diaminopimelate = meso-2,6-diaminopimelate. It participates in amino-acid biosynthesis; L-lysine biosynthesis via DAP pathway; DL-2,6-diaminopimelate from LL-2,6-diaminopimelate: step 1/1. In terms of biological role, catalyzes the stereoinversion of LL-2,6-diaminopimelate (L,L-DAP) to meso-diaminopimelate (meso-DAP), a precursor of L-lysine and an essential component of the bacterial peptidoglycan. The chain is Diaminopimelate epimerase from Idiomarina loihiensis (strain ATCC BAA-735 / DSM 15497 / L2-TR).